The primary structure comprises 705 residues: Fatty acid oxidation complex subunit alpha (705 aa).

The interval 1–188 (MGKTFNLTRR…KMGLVNDVVP (188 aa)) is enoyl-CoA hydratase. Positions 308–705 (RKVKKAVILG…AMAAEKARFF (398 aa)) are 3-hydroxyacyl-CoA dehydrogenase.

The protein in the N-terminal section; belongs to the enoyl-CoA hydratase/isomerase family. This sequence in the central section; belongs to the 3-hydroxyacyl-CoA dehydrogenase family. As to quaternary structure, heterotetramer of two alpha chains (FadJ) and two beta chains (FadI).

Its subcellular location is the cytoplasm. It carries out the reaction a (3S)-3-hydroxyacyl-CoA = a (2E)-enoyl-CoA + H2O. It catalyses the reaction a 4-saturated-(3S)-3-hydroxyacyl-CoA = a (3E)-enoyl-CoA + H2O. The enzyme catalyses a (3S)-3-hydroxyacyl-CoA + NAD(+) = a 3-oxoacyl-CoA + NADH + H(+). The catalysed reaction is (3S)-3-hydroxybutanoyl-CoA = (3R)-3-hydroxybutanoyl-CoA. It functions in the pathway lipid metabolism; fatty acid beta-oxidation. In terms of biological role, catalyzes the formation of a hydroxyacyl-CoA by addition of water on enoyl-CoA. Also exhibits 3-hydroxyacyl-CoA epimerase and 3-hydroxyacyl-CoA dehydrogenase activities. The protein is Fatty acid oxidation complex subunit alpha of Shewanella oneidensis (strain ATCC 700550 / JCM 31522 / CIP 106686 / LMG 19005 / NCIMB 14063 / MR-1).